We begin with the raw amino-acid sequence, 184 residues long: MVQRLKTLYLESAVLKLQETFGYKNPHQIPRIKKIVINCGLSEASQNSKSLESAMKELSIIAGQKGVITRAKKAIAGFKIREGLPIGICITLRGDSMYAFLDRLINLALPRIRDFQGVSSKSFDGHGNYNLGLKEQLMFPEIDYDQIDKIRGMDICIVTNAKTDSEGFYLLEVLGMPFKEKFAN.

The protein belongs to the universal ribosomal protein uL5 family. As to quaternary structure, part of the 50S ribosomal subunit; contacts the 5S rRNA.

The protein resides in the plastid. It localises to the chloroplast. Its function is as follows. Binds 5S rRNA, forms part of the central protuberance of the 50S subunit. This is Large ribosomal subunit protein uL5c (rpl5) from Mesostigma viride (Green alga).